A 585-amino-acid polypeptide reads, in one-letter code: Cysteine/serine-rich nuclear protein 3 (585 aa).

Disordered regions lie at residues Met1–Ser52 and Glu335–Glu395. A compositionally biased stretch (low complexity) spans Ser30 to Val40. Polar residues predominate over residues Asn41–Ser52. The segment covering Glu335 to Gly349 has biased composition (acidic residues). The segment covering Ser351–Pro366 has biased composition (polar residues). The span at Glu368–Lys389 shows a compositional bias: acidic residues.

It belongs to the AXUD1 family.

The protein resides in the nucleus. Its function is as follows. Binds to the consensus sequence 5'-AGAGTG-3' and has transcriptional activator activity. Plays a role in apoptosis. The chain is Cysteine/serine-rich nuclear protein 3 (CSRNP3) from Homo sapiens (Human).